The chain runs to 472 residues: Phosphoenolpyruvate carboxylase (472 aa).

Belongs to the PEPCase type 2 family. Homotetramer. Requires Mg(2+) as cofactor.

The catalysed reaction is oxaloacetate + phosphate = phosphoenolpyruvate + hydrogencarbonate. Functionally, catalyzes the irreversible beta-carboxylation of phosphoenolpyruvate (PEP) to form oxaloacetate (OAA), a four-carbon dicarboxylic acid source for the tricarboxylic acid cycle. The polypeptide is Phosphoenolpyruvate carboxylase (Pyrococcus furiosus (strain ATCC 43587 / DSM 3638 / JCM 8422 / Vc1)).